The following is a 911-amino-acid chain: Eukaryotic translation initiation factor 3 subunit C (911 aa).

2 disordered regions span residues 1 to 38 (MSRF…DDEE) and 155 to 181 (SRFR…GEAA). Over residues 11–20 (SESESSEEEV) the composition is skewed to acidic residues. A compositionally biased stretch (polar residues) spans 23–32 (PNFNKASAFQ). Residues Ser34, Ser165, Ser175, and Ser184 each carry the phosphoserine modification. A compositionally biased stretch (acidic residues) spans 162-171 (DQESEAEDEE). The span at 196–208 (APKIAKSAPAKSV) shows a compositional bias: low complexity. Residues 196–284 (APKIAKSAPA…KRAEDDEDGE (89 aa)) form a disordered region. A compositionally biased stretch (acidic residues) spans 210–236 (ADDEDSDDSIDWDSDSESETESSEDEN). Positions 241-271 (MRERFLKRSTEKGEDKGDDDKRKDKRKEQKL) are enriched in basic and acidic residues. Positions 642 to 818 (FHMHINLELL…ETVVMHRSEP (177 aa)) constitute a PCI domain. Residues 851-911 (FQRGNMGNRG…QQQVQTIDEE (61 aa)) are disordered. Basic residues predominate over residues 885-896 (QRNRNQRGHHKN). Positions 897 to 911 (QQQQQQQQVQTIDEE) are enriched in low complexity.

The protein belongs to the eIF-3 subunit C family. In terms of assembly, component of the eukaryotic translation initiation factor 3 (eIF-3) complex. The eIF-3 complex interacts with pix.

The protein localises to the cytoplasm. Its function is as follows. Component of the eukaryotic translation initiation factor 3 (eIF-3) complex, which is involved in protein synthesis of a specialized repertoire of mRNAs and, together with other initiation factors, stimulates binding of mRNA and methionyl-tRNAi to the 40S ribosome. The eIF-3 complex specifically targets and initiates translation of a subset of mRNAs involved in cell proliferation. This is Eukaryotic translation initiation factor 3 subunit C from Drosophila pseudoobscura pseudoobscura (Fruit fly).